Reading from the N-terminus, the 312-residue chain is MDDKFDDDALPNSKTTPEDYGDKLAEYDYTNTFPNTWMRLREPFREYIAEFVGVAVLIIFGVGADCQVVLSANTGVAPSPKGDYLSLNCGWAIGTAMGVWISGGISGGHINPAVTLALMAWRGFPWWKVPGFIFAQLLGGIVGAGLVYVNYIHAIDIVEGGRHIRTLDTAGLFATYAADYMTNVSCFFSEFLATAVLIVVIHAMNDKRNAPPPAGLAPLVLFFLILGIGASLGMETGYAINPARDLGPRMLTAMVGYGRQVFAFRNQYWIWCPVIAPFLGAQVGTIFYDLFFYKGQDNVFGRLGSHIHISPA.

Topologically, residues 1-50 (MDDKFDDDALPNSKTTPEDYGDKLAEYDYTNTFPNTWMRLREPFREYIAE) are cytoplasmic. Residues 51-71 (FVGVAVLIIFGVGADCQVVLS) form a helical membrane-spanning segment. Topologically, residues 72–89 (ANTGVAPSPKGDYLSLNC) are extracellular. A helical transmembrane segment spans residues 90 to 110 (GWAIGTAMGVWISGGISGGHI). Positions 111–113 (NPA) match the NPA 1 motif. At 111-128 (NPAVTLALMAWRGFPWWK) the chain is on the cytoplasmic side. A helical transmembrane segment spans residues 129-149 (VPGFIFAQLLGGIVGAGLVYV). The Extracellular segment spans residues 150–183 (NYIHAIDIVEGGRHIRTLDTAGLFATYAADYMTN). An N-linked (GlcNAc...) asparagine glycan is attached at Asn183. Residues 184–204 (VSCFFSEFLATAVLIVVIHAM) traverse the membrane as a helical segment. Residues 205 to 213 (NDKRNAPPP) lie on the Cytoplasmic side of the membrane. The chain crosses the membrane as a helical span at residues 214 to 234 (AGLAPLVLFFLILGIGASLGM). Residues 235–267 (ETGYAINPARDLGPRMLTAMVGYGRQVFAFRNQ) are Extracellular-facing. Residues 241–243 (NPA) carry the NPA 2 motif. Residues 268–288 (YWIWCPVIAPFLGAQVGTIFY) form a helical membrane-spanning segment. The Cytoplasmic segment spans residues 289-312 (DLFFYKGQDNVFGRLGSHIHISPA).

The protein belongs to the MIP/aquaporin (TC 1.A.8) family.

The protein resides in the membrane. It carries out the reaction H2O(in) = H2O(out). It catalyses the reaction glycerol(in) = glycerol(out). The enzyme catalyses NH4(+)(in) = NH4(+)(out). Its function is as follows. Water channel required to facilitate the transport of water across membranes. In addition to water, also shows strong glycerol and ammonium transport activities. May be involved in fungal nitrogen (ammonium) support of the plant host in symbiosis. Glycerol accumulation has never been observed in ectomycorrhizal (ECM) fungi, therefore, glycerol permeability of Lacbi1:391485 might be a relict of the affiliation of the protein to the group of aquaglyceroporins, and other osmotic active compounds (e.g. trehalose or mannitol) may have taken over glycerol function in ECM fungi. This chain is Aquaporin Lacbi1:391485, found in Laccaria bicolor (strain S238N-H82 / ATCC MYA-4686) (Bicoloured deceiver).